Here is a 282-residue protein sequence, read N- to C-terminus: Pantothenate synthetase (282 aa).

30–37 (MGFLHDGH) lines the ATP pocket. Catalysis depends on histidine 37, which acts as the Proton donor. Glutamine 60 serves as a coordination point for (R)-pantoate. Glutamine 60 contributes to the beta-alanine binding site. 146 to 149 (GQKD) provides a ligand contact to ATP. Glutamine 152 is a (R)-pantoate binding site. Residues isoleucine 175 and 183–186 (KSSR) each bind ATP.

Belongs to the pantothenate synthetase family. As to quaternary structure, homodimer.

It is found in the cytoplasm. The enzyme catalyses (R)-pantoate + beta-alanine + ATP = (R)-pantothenate + AMP + diphosphate + H(+). It participates in cofactor biosynthesis; (R)-pantothenate biosynthesis; (R)-pantothenate from (R)-pantoate and beta-alanine: step 1/1. Functionally, catalyzes the condensation of pantoate with beta-alanine in an ATP-dependent reaction via a pantoyl-adenylate intermediate. This is Pantothenate synthetase from Campylobacter jejuni subsp. jejuni serotype O:23/36 (strain 81-176).